The primary structure comprises 642 residues: MNKYEVIVVGAGHAGCEAALAAARMGCRTLVLSICLDTVAHMPCSPSVGGVGKGHLVREIDALGGRMALITDRTAIQFRLLNTKKGPAVWGTRTQNDKARYRISMKHCLESEPNLDLKQAHVESLAVEGNRIVGVIDQLGVFFGADAVVLATGTFLRGLVHIGTTSVEAGRAGELASYPLANQLQRLGFTLGRMKTGTPARLGRRSIDFSRFREQHGDEAPKPFSLFTDSIALPQVSCFIGKTHQRTHELVRRHIHLSPLYNGTIRGVSARYCPSLEDKVMRFPDKDFHQIILEPEGLDTEEVYASGTGNSLPYDIQLRLIHSVPGLEEAEVMRPAYAIEYDFVQPTQLKATLGSKLVEGLYMAGQINGTSGYEEAAGQGLWAGINAALKAQGRPPFILDRSEAYLAVMVDDLVTRGTNEPYRIFTSRAEYRLLLREDNADLRLLEKGCELGLHSADAAKELRERRGAIRNELERLRLTHVRPSAQVNQTLAENHSPPLDAPAPLDKLLKRPELNYSTVAILSPPPEPLSSKVTEQVEVECKYEGYLKRQEAEVAKFRQLEQAAIPEDLMYDDIPGLSNELRQKLGAVRPLSLGQATRIPGMTPAAVSVLMVHLRRRAQGGPFLAPVLDPGVNMHSQKKKLA.

FAD is bound by residues 10–15 (GAGHAG), Val122, and Ser177. Residue 269 to 283 (SARYCPSLEDKVMRF) coordinates NAD(+). Gln366 is an FAD binding site.

This sequence belongs to the MnmG family. In terms of assembly, homodimer. Heterotetramer of two MnmE and two MnmG subunits. FAD is required as a cofactor.

It localises to the cytoplasm. In terms of biological role, NAD-binding protein involved in the addition of a carboxymethylaminomethyl (cmnm) group at the wobble position (U34) of certain tRNAs, forming tRNA-cmnm(5)s(2)U34. The sequence is that of tRNA uridine 5-carboxymethylaminomethyl modification enzyme MnmG from Syntrophobacter fumaroxidans (strain DSM 10017 / MPOB).